Here is a 323-residue protein sequence, read N- to C-terminus: Arginase (323 aa).

Positions 119, 142, 144, and 146 each coordinate Mn(2+). Substrate is bound by residues 144 to 148 (HADIN), 155 to 157 (SKN), and aspartate 198. Residues aspartate 247 and aspartate 249 each coordinate Mn(2+). Positions 261 and 292 each coordinate substrate.

It belongs to the arginase family. In terms of assembly, homotrimer. Mn(2+) is required as a cofactor.

The catalysed reaction is L-arginine + H2O = urea + L-ornithine. The protein operates within nitrogen metabolism; urea cycle; L-ornithine and urea from L-arginine: step 1/1. This chain is Arginase (aru1), found in Schizosaccharomyces pombe (strain 972 / ATCC 24843) (Fission yeast).